Reading from the N-terminus, the 35-residue chain is Thaumatin-like protein 6 (35 aa).

Belongs to the thaumatin family.

The protein is Thaumatin-like protein 6 of Glebionis coronaria (Crown daisy).